The sequence spans 194 residues: Cilia- and flagella-associated protein 107 (194 aa).

Mn regions lie at residues 45–60 and 95–107; these read TPQSIYRKEYIPFPDH and ISTYDDHYNRHGY.

In terms of assembly, microtubule inner protein component of sperm flagellar doublet microtubules. Expressed in airway epithelial cells.

The protein localises to the cytoplasm. Its subcellular location is the cytoskeleton. It is found in the cilium axoneme. It localises to the flagellum axoneme. In terms of biological role, microtubule inner protein (MIP) part of the dynein-decorated doublet microtubules (DMTs) in cilia axoneme, which is required for motile cilia beating. The protein is Cilia- and flagella-associated protein 107 of Homo sapiens (Human).